The chain runs to 91 residues: Putative transmembrane protein encoded by LINC00862 (91 aa).

The helical transmembrane segment at 49 to 69 (IMALILMPSLHCFGNILILLF) threads the bilayer.

It localises to the membrane. The chain is Putative transmembrane protein encoded by LINC00862 (LINC00862) from Homo sapiens (Human).